A 146-amino-acid polypeptide reads, in one-letter code: Shadow of prion protein (146 aa).

The signal sequence occupies residues 1–24; sequence MRGTSAVCWSLLLLIALLSQNVTA. A glycan (N-linked (GlcNAc...) asparagine) is linked at Asn-94. Ser-108 carries GPI-anchor amidated serine lipidation. The propeptide at 109–146 is removed in mature form; sequence GTCPLSSHLSFRLIISIGAILTCSSSSIYVSTKINLGK.

This sequence belongs to the SPRN family.

The protein localises to the cell membrane. Its function is as follows. Prion-like protein that has PrP(C)-like neuroprotective activity. The polypeptide is Shadow of prion protein (sprn) (Xenopus tropicalis (Western clawed frog)).